The following is a 295-amino-acid chain: Mediator of RNA polymerase II transcription subunit 6 (295 aa).

The segment at 211 to 243 is disordered; that stretch reads TATAATNGNNAGGGSNKSSVRPTGGANMATVPS. Residue serine 225 is modified to Phosphoserine.

Belongs to the Mediator complex subunit 6 family. In terms of assembly, component of the Mediator complex, which is composed of at least 21 subunits that form three structurally distinct submodules. The Mediator head module contains MED6, MED8, MED11, SRB4/MED17, SRB5/MED18, ROX3/MED19, SRB2/MED20 and SRB6/MED22, the middle module contains MED1, MED4, NUT1/MED5, MED7, CSE2/MED9, NUT2/MED10, SRB7/MED21 and SOH1/MED31, and the tail module contains MED2, PGD1/MED3, RGR1/MED14, GAL11/MED15 and SIN4/MED16. The head and the middle modules interact directly with RNA polymerase II, whereas the elongated tail module interacts with gene-specific regulatory proteins. MED6 interacts directly with SRB4/MED17 and SRB7/MED21.

Its subcellular location is the nucleus. Its function is as follows. Component of the Mediator complex, a coactivator involved in the regulated transcription of nearly all RNA polymerase II-dependent genes. Mediator functions as a bridge to convey information from gene-specific regulatory proteins to the basal RNA polymerase II transcription machinery. The Mediator complex, having a compact conformation in its free form, is recruited to promoters by direct interactions with regulatory proteins and serves for the assembly of a functional preinitiation complex with RNA polymerase II and the general transcription factors. The Mediator complex unfolds to an extended conformation and partially surrounds RNA polymerase II, specifically interacting with the unphosphorylated form of the C-terminal domain (CTD) of RNA polymerase II. The Mediator complex dissociates from the RNA polymerase II holoenzyme and stays at the promoter when transcriptional elongation begins. This is Mediator of RNA polymerase II transcription subunit 6 (MED6) from Saccharomyces cerevisiae (strain ATCC 204508 / S288c) (Baker's yeast).